A 123-amino-acid chain; its full sequence is Ig heavy chain V region HPCG13 (123 aa).

Residues 1–114 (EVKLVESGGG…GSYWYFDVWG (114 aa)) enclose the Ig-like domain.

The sequence is that of Ig heavy chain V region HPCG13 from Mus musculus (Mouse).